The sequence spans 486 residues: Shugoshin-1 (486 aa).

Residues 71 to 154 are a coiled coil; it reads IEVSRVELQK…QNRAKILEKK (84 aa). 6 disordered regions span residues 137–163, 187–209, 222–251, 323–346, 382–403, and 418–467; these read MSKTSNNQQNRAKILEKKTRSSKCAPT, YTSCHEPPQDKTNKRCTNRRKSE, HSCRPHVEYNGSSHDDDPRKTRRRRSARLN, AGSSVAGGEAHKFDIEDPEPPRKS, PIQHEQKRKLSRRKSSRLDPGP, and TVAP…SRRA. The segment covering 331–346 has biased composition (basic and acidic residues); sequence EAHKFDIEDPEPPRKS. The segment covering 387-396 has biased composition (basic residues); it reads QKRKLSRRKS. Residues 423 to 433 show a composition bias toward polar residues; sequence APSSSNALIEQ.

This sequence belongs to the shugoshin family. As to expression, highly expressed in roots. Expressed in panicles. Expressed at low levels in leaves.

Its subcellular location is the nucleus. It localises to the nucleolus. The protein resides in the chromosome. The protein localises to the centromere. Functionally, plays a central role in chromosome cohesion during meiosis I by preventing premature dissociation of cohesin complex from centromeres after prophase, when most of cohesin complex dissociates from chromosomes arms. Required for the timely assembly and maintenance of synaptonemal complex (SC) during early prophase I. Required for maintenance of centromeric cohesion before prophase II and correct segregation of chromatids during meiosis II. Has apparently no function in mitosis. The polypeptide is Shugoshin-1 (Oryza sativa subsp. japonica (Rice)).